The chain runs to 1328 residues: Tubulin polyglutamylase TTLL5 (1328 aa).

The segment at 1–22 (MPVVMARDLEETASSSEDEDLA) is disordered. One can recognise a TTL domain in the interval 62–407 (RYHLSYKIVR…VCQDPAQRTS (346 aa)). ATP contacts are provided by residues K180, 186–187 (RG), 208–211 (SRYI), and 221–223 (KFD). Position 186 (R186) interacts with a protein. L-glutamate is bound at residue R247. Residue 268-269 (TN) coordinates ATP. L-glutamate-binding residues include Y270, S271, and K293. Mg(2+) is bound by residues D353, E366, and N368. A c-MTBD region region spans residues 378–488 (PLDLKIKASM…RGGFIRIFPT (111 aa)). Residue K384 participates in L-glutamate binding. 7 disordered regions span residues 411–436 (IYPSFESSRRNPFQKPQRTRPLSASD), 585–631 (AQPA…QAKY), 834–853 (HSKSSKNSSSYSDSGAKGDH), 948–975 (PALLLSPVPDNAPPSIHSGTQNVSPAGL), 1006–1032 (SSAKAAGSCHPHKHHSGIAKTQKEGED), 1085–1129 (RSSA…LQTG), and 1212–1271 (RISS…QLNG). A compositionally biased stretch (polar residues) spans 420–432 (RNPFQKPQRTRPL). Residues 597 to 617 (ESEEEEEVGLDNDDEEQEASQ) are compositionally biased toward acidic residues. Residues 838–847 (SKNSSSYSDS) are compositionally biased toward low complexity. Composition is skewed to polar residues over residues 1116-1128 (THSSPPGSRSLQT), 1214-1227 (SSATTGGQKPNTLP), 1234-1248 (PNSSTLVSKPASNHK), and 1257-1271 (QRASKGSSAEGQLNG).

It belongs to the tubulin--tyrosine ligase family. Interacts with the transcriptional coactivators NCOA1/SRC-1 and NCOA2/TIF2. The cofactor is Mg(2+). As to expression, highly expressed in brain, kidney, liver, spleen and testis. Expressed in heart, lung, muscle and trachea.

It is found in the cell projection. The protein localises to the cilium. Its subcellular location is the cytoplasm. It localises to the cytoskeleton. The protein resides in the cilium basal body. It is found in the nucleus. It catalyses the reaction L-glutamyl-[protein] + L-glutamate + ATP = gamma-L-glutamyl-L-glutamyl-[protein] + ADP + phosphate + H(+). The enzyme catalyses (L-glutamyl)(n)-gamma-L-glutamyl-L-glutamyl-[protein] + L-glutamate + ATP = (L-glutamyl)(n+1)-gamma-L-glutamyl-L-glutamyl-[protein] + ADP + phosphate + H(+). Functionally, polyglutamylase which modifies tubulin, generating polyglutamate side chains on the gamma-carboxyl group of specific glutamate residues within the C-terminal tail of tubulin. Preferentially mediates ATP-dependent initiation step of the polyglutamylation reaction over the elongation step. Preferentially modifies the alpha-tubulin tail over a beta-tail. Required for CCSAP localization to both polyglutamylated spindle and cilia microtubules. Increases the effects of transcriptional coactivator NCOA2/TIF2 in glucocorticoid receptor-mediated repression and induction and in androgen receptor-mediated induction. This is Tubulin polyglutamylase TTLL5 from Mus musculus (Mouse).